The primary structure comprises 352 residues: Ion-translocating oxidoreductase complex subunit D (352 aa).

The next 4 membrane-spanning stretches (helical) occupy residues 20-40 (IMLLVVIAALPGIAAQTWFFG), 42-62 (GTLFQIVLAAITALVAEAIVL), 69-91 (VASHLQDYSALLTGLLLAVSIPP), and 123-143 (PAMIGYVVLLISFPVQMTSWL). T187 bears the FMN phosphoryl threonine mark. Transmembrane regions (helical) follow at residues 215-235 (LAGVGWQWVNLAWLVGGVFLL), 242-262 (WHIPVSFLLTLALCAALGWLF), 267-287 (LASPQLHLLSGATMLGAFFIL), 301-321 (LIFGALAGVLVWLIRSFGGYP), and 322-342 (DGVAFAVLLANITVPLIDYYT).

The protein belongs to the NqrB/RnfD family. In terms of assembly, the complex is composed of six subunits: RsxA, RsxB, RsxC, RsxD, RsxE and RsxG. The cofactor is FMN.

It localises to the cell inner membrane. Part of a membrane-bound complex that couples electron transfer with translocation of ions across the membrane. Required to maintain the reduced state of SoxR. In Salmonella enteritidis PT4 (strain P125109), this protein is Ion-translocating oxidoreductase complex subunit D.